The sequence spans 504 residues: Plasma protease C1 inhibitor (504 aa).

A signal peptide spans 1-22 (MASKLTPLTLLLLLLAGDRAFS). Residues 23–75 (DSEVTSHSSQDPLVVQEGSRDSVPERDGSRSPIEHTGQSSTWPTTSGSTKISN) are disordered. A compositionally biased stretch (polar residues) spans 24-33 (SEVTSHSSQD). Positions 40–55 (GSRDSVPERDGSRSPI) are enriched in basic and acidic residues. The segment covering 58–75 (TGQSSTWPTTSGSTKISN) has biased composition (polar residues). Residues N75, N83, N107, N243, and N356 are each glycosylated (N-linked (GlcNAc...) asparagine). Residues 94 to 132 (AQLPEDSPSQSPVNSSSPPSTASAPPTQAPTEPLCPEPL) are disordered. The span at 100–125 (SPSQSPVNSSSPPSTASAPPTQAPTE) shows a compositional bias: low complexity.

It belongs to the serpin family. As to quaternary structure, interacts with MASP1.

It is found in the secreted. Functionally, serine protease inhibitor, which acrs as a regulator of the classical complement pathway. Forms a proteolytically inactive stoichiometric complex with the C1r or C1s proteases. May also regulate blood coagulation, fibrinolysis and the generation of kinins. Very efficient inhibitor of FXIIa. Inhibits chymotrypsin and kallikrein. This Rattus norvegicus (Rat) protein is Plasma protease C1 inhibitor (Serping1).